The primary structure comprises 287 residues: Acetyl-coenzyme A carboxylase carboxyl transferase subunit beta (287 aa).

The region spanning 25-287 (VWTKCSACEQ…KMLNTHVIEE (263 aa)) is the CoA carboxyltransferase N-terminal domain. The Zn(2+) site is built by cysteine 29, cysteine 32, cysteine 48, and cysteine 51. Residues 29–51 (CSACEQVLYRAELERNLEVCPKC) form a C4-type zinc finger.

Belongs to the AccD/PCCB family. In terms of assembly, acetyl-CoA carboxylase is a heterohexamer composed of biotin carboxyl carrier protein (AccB), biotin carboxylase (AccC) and two subunits each of ACCase subunit alpha (AccA) and ACCase subunit beta (AccD). The cofactor is Zn(2+).

It localises to the cytoplasm. The catalysed reaction is N(6)-carboxybiotinyl-L-lysyl-[protein] + acetyl-CoA = N(6)-biotinyl-L-lysyl-[protein] + malonyl-CoA. It participates in lipid metabolism; malonyl-CoA biosynthesis; malonyl-CoA from acetyl-CoA: step 1/1. Its function is as follows. Component of the acetyl coenzyme A carboxylase (ACC) complex. Biotin carboxylase (BC) catalyzes the carboxylation of biotin on its carrier protein (BCCP) and then the CO(2) group is transferred by the transcarboxylase to acetyl-CoA to form malonyl-CoA. The sequence is that of Acetyl-coenzyme A carboxylase carboxyl transferase subunit beta from Aeromonas hydrophila subsp. hydrophila (strain ATCC 7966 / DSM 30187 / BCRC 13018 / CCUG 14551 / JCM 1027 / KCTC 2358 / NCIMB 9240 / NCTC 8049).